Reading from the N-terminus, the 87-residue chain is U14-lycotoxin-Ls1c (87 aa).

An N-terminal signal peptide occupies residues 1–20 (MNSKVFAVLLLLALLTCILS). The WAP domain maps to 21 to 66 (EKYCPTPRNTSCKKMNIKNNCCRDSDCTSNAFCCAEPCGNFCHKAS). 5 disulfides stabilise this stretch: cysteine 24-cysteine 54, cysteine 32-cysteine 58, cysteine 41-cysteine 53, cysteine 42-cysteine 80, and cysteine 47-cysteine 62.

Belongs to the venom protein 11 family. 01 (wap-1) subfamily. Post-translationally, contains 5 disulfide bonds. As to expression, expressed by the venom gland.

The protein resides in the secreted. In terms of biological role, has antibacterial activity. This Lycosa singoriensis (Wolf spider) protein is U14-lycotoxin-Ls1c.